We begin with the raw amino-acid sequence, 91 residues long: Protein transport protein Sec61 subunit beta (91 aa).

Positions 1–45 (MSTSAQVPGGPAAQMKRRNNAQRQEAKASQRPTSTRSVGAGGSSS) are disordered. Residues 1–62 (MSTSAQVPGG…DESQGLKVDP (62 aa)) are Cytoplasmic-facing. Positions 30 to 45 (QRPTSTRSVGAGGSSS) are enriched in polar residues. The helical transmembrane segment at 63–83 (VVVMVLSLGFIFSVVALHILA) threads the bilayer.

Belongs to the SEC61-beta family. As to quaternary structure, heterotrimeric complex composed of SEC61, SEB1 and SSS1.

It is found in the endoplasmic reticulum membrane. Functionally, necessary for protein translocation in the endoplasmic reticulum. This Yarrowia lipolytica (strain CLIB 122 / E 150) (Yeast) protein is Protein transport protein Sec61 subunit beta (SBH1).